The sequence spans 61 residues: Small ribosomal subunit protein uS14 (61 aa).

Zn(2+) is bound by residues Cys-24, Cys-27, Cys-40, and Cys-43.

The protein belongs to the universal ribosomal protein uS14 family. Zinc-binding uS14 subfamily. Part of the 30S ribosomal subunit. Contacts proteins S3 and S10. The cofactor is Zn(2+).

Its function is as follows. Binds 16S rRNA, required for the assembly of 30S particles and may also be responsible for determining the conformation of the 16S rRNA at the A site. The sequence is that of Small ribosomal subunit protein uS14 from Thermus thermophilus (strain ATCC BAA-163 / DSM 7039 / HB27).